Here is a 166-residue protein sequence, read N- to C-terminus: Small ribosomal subunit protein uS5 (166 aa).

Residues 12–75 form the S5 DRBM domain; sequence YIEKLVQVNR…EAARRNMIQV (64 aa).

This sequence belongs to the universal ribosomal protein uS5 family. In terms of assembly, part of the 30S ribosomal subunit. Contacts proteins S4 and S8.

With S4 and S12 plays an important role in translational accuracy. Functionally, located at the back of the 30S subunit body where it stabilizes the conformation of the head with respect to the body. This Pseudomonas fluorescens (strain Pf0-1) protein is Small ribosomal subunit protein uS5.